Here is a 571-residue protein sequence, read N- to C-terminus: PR domain zinc finger protein 14 (571 aa).

S79 carries the phosphoserine modification. Residues 129–191 (LGHQIIGGDN…PKPSNQEGKS (63 aa)) are disordered. Residues 165–176 (RTSQLLPCSPSK) show a composition bias toward polar residues. The segment at 194–384 (RFQFTEEDLH…DIPVSLQVTE (191 aa)) is interaction with CBFA2T2. Positions 251-367 (EGLCLMQTVF…QNQELLVWYG (117 aa)) constitute an SET domain. Residues 400–424 (YRCERCGKVFTYKYYRDKHLKYTPC) form a C2H2-type 1; atypical zinc finger. C2H2-type zinc fingers lie at residues 432–455 (FPCS…LHVH), 461–483 (HKCS…MRVH), 489–511 (YQCV…IRQH), 517–540 (FKCK…RRSH), and 546–568 (CSCS…MKFH).

The protein belongs to the class V-like SAM-binding methyltransferase superfamily. As to quaternary structure, interacts with CBFA2T2. As to expression, expressed in embryonic stem cells. Tends to be overexpressed in breast cancer (at protein level).

It localises to the nucleus. Its function is as follows. Transcription factor that has both positive and negative roles on transcription. Required for the maintenance of embryonic stem cell identity and the reacquisition of pluripotency in somatic cells. May play an essential role in germ cell development at 2 levels: the reacquisition of potential pluripotency, including SOX2 up-regulation, and successful epigenetic reprogramming, characterized by EHMT1 repression. Its association with CBFA2T2 is required for the functions in pluripotency and germ cell formation. Directly up-regulates the expression of pluripotency gene POU5F1 through its proximal enhancer. Binds to the DNA consensus sequence 5'-GGTC[TC]CTAA-3'. In Homo sapiens (Human), this protein is PR domain zinc finger protein 14 (PRDM14).